Reading from the N-terminus, the 1228-residue chain is DNA-directed RNA polymerase subunit beta (1228 aa).

It belongs to the RNA polymerase beta chain family. In terms of assembly, the RNAP catalytic core consists of 2 alpha, 1 beta, 1 beta' and 1 omega subunit. When a sigma factor is associated with the core the holoenzyme is formed, which can initiate transcription.

It catalyses the reaction RNA(n) + a ribonucleoside 5'-triphosphate = RNA(n+1) + diphosphate. In terms of biological role, DNA-dependent RNA polymerase catalyzes the transcription of DNA into RNA using the four ribonucleoside triphosphates as substrates. The sequence is that of DNA-directed RNA polymerase subunit beta from Leptospira biflexa.